Here is a 92-residue protein sequence, read N- to C-terminus: Small ribosomal subunit protein uS19c (92 aa).

The protein belongs to the universal ribosomal protein uS19 family.

It is found in the plastid. It localises to the chloroplast. Its function is as follows. Protein S19 forms a complex with S13 that binds strongly to the 16S ribosomal RNA. The polypeptide is Small ribosomal subunit protein uS19c (Chlorokybus atmophyticus (Soil alga)).